A 363-amino-acid polypeptide reads, in one-letter code: Peptide chain release factor 1 (363 aa).

An N5-methylglutamine modification is found at Gln-237. Over residues 284–297 (ERAKQQSERSEQRR) the composition is skewed to basic and acidic residues. Residues 284–306 (ERAKQQSERSEQRRLAVGSGDRS) form a disordered region.

This sequence belongs to the prokaryotic/mitochondrial release factor family. In terms of processing, methylated by PrmC. Methylation increases the termination efficiency of RF1.

The protein resides in the cytoplasm. Peptide chain release factor 1 directs the termination of translation in response to the peptide chain termination codons UAG and UAA. The sequence is that of Peptide chain release factor 1 from Halorhodospira halophila (strain DSM 244 / SL1) (Ectothiorhodospira halophila (strain DSM 244 / SL1)).